The primary structure comprises 84 residues: Large ribosomal subunit protein bL28 (84 aa).

It belongs to the bacterial ribosomal protein bL28 family.

In Clostridium perfringens (strain 13 / Type A), this protein is Large ribosomal subunit protein bL28.